The chain runs to 301 residues: Mitochondrial carnitine/acylcarnitine carrier protein (301 aa).

A2 carries the N-acetylalanine modification. Residues 2–12 lie on the Cytoplasmic side of the membrane; sequence ADQPKPISPLK. Solcar repeat units lie at residues 8 to 99, 108 to 196, and 207 to 293; these read ISPL…GKKL, LSYP…LKNI, and LSAP…AMKF. The helical transmembrane segment at 13–31 threads the bilayer; that stretch reads NLLAGGFGGVCLVFVGHPL. Over 32–73 the chain is Mitochondrial matrix; sequence DTVKVRLQTQPPSLPGQPPMYSGTFDCFRKTLFREGITGLYR. A helical transmembrane segment spans residues 74 to 93; sequence GMAAPIIGVTPMFAVCFFGF. Topologically, residues 94 to 112 are cytoplasmic; it reads GLGKKLQQKHPEDVLSYPQ. The helical transmembrane segment at 113-131 threads the bilayer; it reads LFAAGMLSGVFTTGIMTPG. The Mitochondrial matrix segment spans residues 132-170; sequence ERIKCLLQIQASSGESKYTGTLDCAKKLYQEFGIRGIYK. Residues K148 and K157 each carry the N6-acetyllysine modification. The residue at position 170 (K170) is an N6-acetyllysine; alternate. An N6-succinyllysine; alternate modification is found at K170. Residues 171–190 traverse the membrane as a helical segment; it reads GTVLTLMRDVPASGMYFMTY. Residues 191-211 are Cytoplasmic-facing; sequence EWLKNIFTPEGKRVSELSAPR. Residues 212–230 traverse the membrane as a helical segment; sequence ILVAGGIAGIFNWAVAIPP. The Mitochondrial matrix segment spans residues 231–267; it reads DVLKSRFQTAPPGKYPNGFRDVLRELIRDEGVTSLYK. Residues 268-287 form a helical membrane-spanning segment; the sequence is GFNAVMIRAFPANAACFLGF. At 288 to 301 the chain is on the cytoplasmic side; the sequence is EVAMKFLNWATPNL.

It belongs to the mitochondrial carrier (TC 2.A.29) family.

It is found in the mitochondrion inner membrane. It catalyses the reaction O-acetyl-(R)-carnitine(in) + (R)-carnitine(out) = O-acetyl-(R)-carnitine(out) + (R)-carnitine(in). It carries out the reaction an O-acyl-(R)-carnitine(in) + (R)-carnitine(out) = an O-acyl-(R)-carnitine(out) + (R)-carnitine(in). The enzyme catalyses O-propanoyl-(R)-carnitine(in) + (R)-carnitine(out) = O-propanoyl-(R)-carnitine(out) + (R)-carnitine(in). The catalysed reaction is O-hexadecanoyl-(R)-carnitine(in) + (R)-carnitine(out) = O-hexadecanoyl-(R)-carnitine(out) + (R)-carnitine(in). It catalyses the reaction O-octanoyl-(R)-carnitine(in) + (R)-carnitine(out) = O-octanoyl-(R)-carnitine(out) + (R)-carnitine(in). It carries out the reaction (R)-carnitine(in) = (R)-carnitine(out). Its function is as follows. Mediates the electroneutral exchange of acylcarnitines (O-acyl-(R)-carnitine or L-acylcarnitine) of different acyl chain lengths (ranging from O-acetyl-(R)-carnitine to long-chain O-acyl-(R)-carnitines) with free carnitine ((R)-carnitine or L-carnitine) across the mitochondrial inner membrane, via a ping-pong mechanism. Key player in the mitochondrial oxidation pathway, it translocates the fatty acids in the form of acylcarnitines into the mitochondrial matrix, where the carnitine palmitoyltransferase 2 (CPT-2) activates them to undergo fatty acid beta-oxidation. Catalyzes the unidirectional transport (uniport) of carnitine at lower rates than the antiport (exchange). The protein is Mitochondrial carnitine/acylcarnitine carrier protein of Homo sapiens (Human).